Consider the following 44-residue polypeptide: DKLIGSCVWGAVNYTSDCNGECKRRGYKGGHCGSFANVNCWCET.

Cystine bridges form between Cys-7/Cys-32, Cys-18/Cys-40, and Cys-22/Cys-42.

It is found in the secreted. Its function is as follows. This peptide has potent anti-fungal activity. Has no activity against Gram-negative and Gram-positive bacteria. The protein is Defensin heliomicin of Heliothis virescens (Tobacco budworm moth).